We begin with the raw amino-acid sequence, 63 residues long: YLDVKQLANYLLCIGNGQVFNGRKTCQIGCRAVCQQPGCSGYKECEQIPNIRLHKYRCHCNEA.

Monomer. Post-translationally, contains four disulfide bonds.

The protein localises to the secreted. In terms of biological role, has antimicrobial activity against Gram-positive bacteria and fungi. In Megoura viciae (Vetch aphid), this protein is Megourin-1.